Consider the following 795-residue polypeptide: MPAVKKPQILVVRNQVIFPYNGFELDVGRERSKKLIKALKNLKTKRLVLVTQKNSDQLNPEFDDIYHCGTLCDIDEIIEVPSEDGKTADYKIKGKGLQRVAITSFSDADLTKYDHHFLNSTLTENKALDKLLERIFPDKEDFAEILDSLNSFLELQELKKLSKVPKDIKRYDIITFKLASLIFKDITLQQAILEENDIEKRLQKIIGSGIEDLGHISEEARAKQRESEFDKIDNRITRKVNEQLSRQQRDFYLREKLRVIREEIGMTSKKEDEVSNIRKKLEENPYPEHIKKRILSELDHFENSSSSSQESTLTKTYIDTLMNLPWWQESKDNADVKNLIKILNKNHSGLDKVKERVVEYLAVQLRTKKLKGPIMCLVGPPGVGKSSLAKSIAEALNKCFVKVSLGGVHDESEIRGHRKTYLGSMPGRILKGMVRAKVINPLFLLDEIDKMTSSNQGYPSGALLEVLDPELNNKFSDNYVEEDYDLSKVMFVATANYIEDIPEALLDRMEVIELTSYTEQEKLQITKSHLVKRCLDDAEIKTDDLKFTDEGISYIIKFYTREAGVRQLERLIQQIVRKYIVNLQKTGEQQVVVDVDLVKKYLKKEIFDYTVRDEDALPGIVNGMAYTPTGGDLLPIEVTHVAGKGDLILTGNLKQTMRESASVALGYVKANAQSFNINPNLFKKVDINIHVPGGGIPKDGPSAGAALVTAIISSLTGKKVDPKIAMTGEITLRGKVMTIGGVKEKTISAYRGGVRTIFMPEKNERYLDEVPKDIVKDLEIILVKEYKDIYNKIFN.

One can recognise a Lon N-terminal domain in the interval 7-213 (PQILVVRNQV…KIIGSGIEDL (207 aa)). Residue 379-386 (GPPGVGKS) participates in ATP binding. The 181-residue stretch at 615-795 (DALPGIVNGM…YKDIYNKIFN (181 aa)) folds into the Lon proteolytic domain. Residues Ser702 and Lys745 contribute to the active site.

This sequence belongs to the peptidase S16 family. In terms of assembly, homohexamer. Organized in a ring with a central cavity.

The protein resides in the cytoplasm. The catalysed reaction is Hydrolysis of proteins in presence of ATP.. ATP-dependent serine protease that mediates the selective degradation of mutant and abnormal proteins as well as certain short-lived regulatory proteins. Required for cellular homeostasis and for survival from DNA damage and developmental changes induced by stress. Degrades polypeptides processively to yield small peptide fragments that are 5 to 10 amino acids long. Binds to DNA in a double-stranded, site-specific manner. The sequence is that of Lon protease from Mycoplasma pneumoniae (strain ATCC 29342 / M129 / Subtype 1) (Mycoplasmoides pneumoniae).